The sequence spans 648 residues: MDEYDEDPGRRASKLMETLSIYDVYQDGMYGEPNPDMEKTKRMNGSSSTPGNKVYSAAPVRSVNGNRASVPLDFCSPQREAVYPDPDVYCTKSEVALPCYSGASDRLRRYTHAEVQGHRYSTGCAYDGLVLGKQVAVSGARSNSLCMSSPDGRYTATSPRSSLASSHSSQDQSKHTSPRSSISSPRSSLVSPGQGEGTSVISPRSSYASTASDTSKHSSPRTSLNSYDCGSKPSSNRTSGISMGYDQRHISPRSSTTSPRSSYSDSRFTPAGGHDPESAAVHGIPMASPRSSICSQPAVAANCVVSPRSSISSHSSRSSRSSRGSMSAYPELQLPMLGPGLPEDALLQDFTEPNGLHNNRVHLQTFPVLEEPQQQNSEVNIGFNYCKAGAGGQRFKLPYQVTPSRDSGPSQAERRLEALTLELEKELEIHMKKEYFGICVKCGKGVYGASQACQAMGNLYHTNCFTCCSCGRRLRGKAFYNVNGKVYCEEDFLYSGFQQTAEKCFVCGHLIMEMILQALGRSYHPGCFRCVICKEGLDGVPFTVDVENNIYCVKDYHTVFAPKCASCNQPILPAQGSEETIRVVSMDKDYHVDCYHCEDCGLQLNDEEGHRCYPLEGHLLCHRCHLHRLKTPLAPHPPPSYPLHVTEL.

Disordered stretches follow at residues 27-56 (DGMYGEPNPDMEKTKRMNGSSSTPGNKVYS), 142-291 (SNSL…SPRS), and 306-327 (SPRSSISSHSSRSSRSSRGSMS). Composition is skewed to low complexity over residues 158–171 (SPRSSLASSHSSQD) and 178–192 (PRSSISSPRSSLVSP). Polar residues-rich tracts occupy residues 197-213 (GTSVISPRSSYASTASD) and 220-241 (PRTSLNSYDCGSKPSSNRTSGI). The segment covering 252 to 267 (PRSSTTSPRSSYSDSR) has biased composition (low complexity). LIM zinc-binding domains lie at 437–498 (GICV…SGFQ), 502–561 (EKCF…TVFA), and 562–631 (PKCA…RLKT).

This sequence belongs to the zyxin/ajuba family.

The protein resides in the cell junction. Its subcellular location is the adherens junction. The protein localises to the nucleus. May monitor slit diaphragm protein assembly, a specialized adherens junction characteristic of podocytes. In case of podocyte injury, it shuttles into the nucleus and acts as a transcription regulator. Plays a role in the regulation of cell morphology and cytoskeletal organization. Acts as a transcriptional corepressor for snai1 and snai2/slug and plays a role in regulating neural crest development. This is Wilms tumor protein 1-interacting protein homolog (wtip) from Danio rerio (Zebrafish).